Here is a 72-residue protein sequence, read N- to C-terminus: Translation initiation factor IF-1 (72 aa).

In terms of domain architecture, S1-like spans 1–72; sequence MSKDDVIEMQ…TRGRITWRAK (72 aa).

Belongs to the IF-1 family. As to quaternary structure, component of the 30S ribosomal translation pre-initiation complex which assembles on the 30S ribosome in the order IF-2 and IF-3, IF-1 and N-formylmethionyl-tRNA(fMet); mRNA recruitment can occur at any time during PIC assembly.

The protein resides in the cytoplasm. One of the essential components for the initiation of protein synthesis. Stabilizes the binding of IF-2 and IF-3 on the 30S subunit to which N-formylmethionyl-tRNA(fMet) subsequently binds. Helps modulate mRNA selection, yielding the 30S pre-initiation complex (PIC). Upon addition of the 50S ribosomal subunit IF-1, IF-2 and IF-3 are released leaving the mature 70S translation initiation complex. In Clostridium botulinum (strain ATCC 19397 / Type A), this protein is Translation initiation factor IF-1.